A 149-amino-acid polypeptide reads, in one-letter code: SsrA-binding protein (149 aa).

The protein belongs to the SmpB family.

It is found in the cytoplasm. Required for rescue of stalled ribosomes mediated by trans-translation. Binds to transfer-messenger RNA (tmRNA), required for stable association of tmRNA with ribosomes. tmRNA and SmpB together mimic tRNA shape, replacing the anticodon stem-loop with SmpB. tmRNA is encoded by the ssrA gene; the 2 termini fold to resemble tRNA(Ala) and it encodes a 'tag peptide', a short internal open reading frame. During trans-translation Ala-aminoacylated tmRNA acts like a tRNA, entering the A-site of stalled ribosomes, displacing the stalled mRNA. The ribosome then switches to translate the ORF on the tmRNA; the nascent peptide is terminated with the 'tag peptide' encoded by the tmRNA and targeted for degradation. The ribosome is freed to recommence translation, which seems to be the essential function of trans-translation. The chain is SsrA-binding protein from Mesoplasma florum (strain ATCC 33453 / NBRC 100688 / NCTC 11704 / L1) (Acholeplasma florum).